The primary structure comprises 592 residues: Aspartate--tRNA ligase (592 aa).

Glu-171 provides a ligand contact to L-aspartate. An aspartate region spans residues 195–198; the sequence is QLFK. Arg-217 serves as a coordination point for L-aspartate. ATP-binding positions include 217-219 and Gln-226; that span reads RDE. His-448 contributes to the L-aspartate binding site. Glu-482 contributes to the ATP binding site. Arg-489 serves as a coordination point for L-aspartate. Residue 534–537 coordinates ATP; that stretch reads GLDR.

Belongs to the class-II aminoacyl-tRNA synthetase family. Type 1 subfamily. Homodimer.

It is found in the cytoplasm. The enzyme catalyses tRNA(Asp) + L-aspartate + ATP = L-aspartyl-tRNA(Asp) + AMP + diphosphate. Functionally, catalyzes the attachment of L-aspartate to tRNA(Asp) in a two-step reaction: L-aspartate is first activated by ATP to form Asp-AMP and then transferred to the acceptor end of tRNA(Asp). The polypeptide is Aspartate--tRNA ligase (Vibrio parahaemolyticus serotype O3:K6 (strain RIMD 2210633)).